Consider the following 100-residue polypeptide: Urease subunit gamma (100 aa).

This sequence belongs to the urease gamma subunit family. As to quaternary structure, heterotrimer of UreA (gamma), UreB (beta) and UreC (alpha) subunits. Three heterotrimers associate to form the active enzyme.

Its subcellular location is the cytoplasm. The enzyme catalyses urea + 2 H2O + H(+) = hydrogencarbonate + 2 NH4(+). It functions in the pathway nitrogen metabolism; urea degradation; CO(2) and NH(3) from urea (urease route): step 1/1. The polypeptide is Urease subunit gamma (Enterobacter sp. (strain 638)).